The primary structure comprises 652 residues: MFGVYRVFVLLVFVSQLCNGFYLPGSYMHTYSDGDSIFAKVNSLTSIETELPFSYYSLPYCQPLEGIKKSAENLGELLMGDQIDNSAYRFRMRTNESLYLCTTSPLNEHEVKLLKQRTRELYQVNMILDNLPALRFAKQNGVTIQWTGYPVGYSPPNSNDDYIINHLKFKVLVHEYEGNVMEVIGTGEEGMGVISEADKKKALGYEIVGFEVVPCSVKYDAEKMTKLHMYDPVPSVNCPLELDKAQIIKEHERITFTYEVEFVKSETRWPSRWDAYLKMEGARVHWFSILNSLMVIFFLAGIVFVIFLRTVRRDLTKYEELDKEAQAQMNEELSGWKLVVGDVFREPEMSKLLCIMVGDGVRITGMAVVTIVFAALGFMSPASRGMLLTGMIILYLFLGIVAGYAGVRLWRTVKGTSEGWRSLSWSIACFFPGIAFVILTVLNFLLWSSNSTGAIPISLYFELLALWFCISVPLTLFGGFLGTRAEAIQFPVRTNQIPREIPERKYPSWLLVLGAGTLPFGTLFIELFFIFSSIWLGRFYYVFGFLLIVLLLLVVVCAEVSVVLTYMHLCVEDWRWWWKAFYASGSVALYVFAYSINYLVFDLQSLSGPVSAMLYIGYSLLMAIAIMLATGTIGFLTSFYFVHYLFSSVKID.

A signal peptide spans 1-20 (MFGVYRVFVLLVFVSQLCNG). At 21-286 (FYLPGSYMHT…LKMEGARVHW (266 aa)) the chain is on the lumenal side. Residues 287–307 (FSILNSLMVIFFLAGIVFVIF) traverse the membrane as a helical segment. The Cytoplasmic segment spans residues 308–362 (LRTVRRDLTKYEELDKEAQAQMNEELSGWKLVVGDVFREPEMSKLLCIMVGDGVR). A helical transmembrane segment spans residues 363-383 (ITGMAVVTIVFAALGFMSPAS). At 384–386 (RGM) the chain is on the lumenal side. A helical membrane pass occupies residues 387 to 407 (LLTGMIILYLFLGIVAGYAGV). Residues 408-426 (RLWRTVKGTSEGWRSLSWS) lie on the Cytoplasmic side of the membrane. Residues 427–447 (IACFFPGIAFVILTVLNFLLW) form a helical membrane-spanning segment. Topologically, residues 448–460 (SSNSTGAIPISLY) are lumenal. The chain crosses the membrane as a helical span at residues 461 to 481 (FELLALWFCISVPLTLFGGFL). The Cytoplasmic portion of the chain corresponds to 482-510 (GTRAEAIQFPVRTNQIPREIPERKYPSWL). Residues 511-531 (LVLGAGTLPFGTLFIELFFIF) traverse the membrane as a helical segment. Residues 532–541 (SSIWLGRFYY) are Lumenal-facing. Residues 542 to 562 (VFGFLLIVLLLLVVVCAEVSV) traverse the membrane as a helical segment. The Cytoplasmic segment spans residues 563-580 (VLTYMHLCVEDWRWWWKA). The chain crosses the membrane as a helical span at residues 581-601 (FYASGSVALYVFAYSINYLVF). Residues 602-613 (DLQSLSGPVSAM) lie on the Lumenal side of the membrane. Residues 614–634 (LYIGYSLLMAIAIMLATGTIG) traverse the membrane as a helical segment. Residues 635 to 652 (FLTSFYFVHYLFSSVKID) lie on the Cytoplasmic side of the membrane. The Endoplasmic reticulum export signal motif lies at 641–646 (FVHYLF). The Golgi retention signal signature appears at 650–652 (KID).

The protein belongs to the nonaspanin (TM9SF) (TC 9.A.2) family.

It is found in the endosome membrane. Its subcellular location is the golgi apparatus membrane. The polypeptide is Transmembrane 9 superfamily member 12 (Arabidopsis thaliana (Mouse-ear cress)).